Consider the following 377-residue polypeptide: Chaperone protein DnaJ (377 aa).

Residues 5–69 (DYYEVLGISK…QKRAQYDQYG (65 aa)) form the J domain. A CR-type zinc finger spans residues 134-216 (GKDAEIEIPR…CHGKGRVTKT (83 aa)). Zn(2+) is bound by residues Cys-147, Cys-150, Cys-164, Cys-167, Cys-190, Cys-193, Cys-204, and Cys-207. CXXCXGXG motif repeat units follow at residues 147 to 154 (CDTCHGSG), 164 to 171 (CSHCGGKG), 190 to 197 (CQYCNGTG), and 204 to 211 (CPTCHGKG).

This sequence belongs to the DnaJ family. As to quaternary structure, homodimer. Zn(2+) serves as cofactor.

Its subcellular location is the cytoplasm. Its function is as follows. Participates actively in the response to hyperosmotic and heat shock by preventing the aggregation of stress-denatured proteins and by disaggregating proteins, also in an autonomous, DnaK-independent fashion. Unfolded proteins bind initially to DnaJ; upon interaction with the DnaJ-bound protein, DnaK hydrolyzes its bound ATP, resulting in the formation of a stable complex. GrpE releases ADP from DnaK; ATP binding to DnaK triggers the release of the substrate protein, thus completing the reaction cycle. Several rounds of ATP-dependent interactions between DnaJ, DnaK and GrpE are required for fully efficient folding. Also involved, together with DnaK and GrpE, in the DNA replication of plasmids through activation of initiation proteins. This is Chaperone protein DnaJ from Listeria monocytogenes serotype 1/2a (strain 10403S).